A 163-amino-acid polypeptide reads, in one-letter code: Epithelial membrane protein 3 (163 aa).

The helical transmembrane segment at 4 to 24 (LLLVVSALHILILVLLFVATL) threads the bilayer. 2 N-linked (GlcNAc...) asparagine glycosylation sites follow: asparagine 46 and asparagine 56. The next 3 membrane-spanning stretches (helical) occupy residues 66–86 (VQALMVLSLILCCLSFILFMI), 100–120 (TGLCQLCTSAAVFSGALIYAI), and 139–159 (FALAWVAFPLALVSGIIYIHL).

The protein belongs to the PMP-22/EMP/MP20 family.

The protein localises to the membrane. Functionally, probably involved in cell proliferation and cell-cell interactions. The sequence is that of Epithelial membrane protein 3 (Emp3) from Rattus norvegicus (Rat).